A 326-amino-acid chain; its full sequence is Biotin synthase (326 aa).

Residues 51 to 278 (NRVQVSRLIS…KSFVRLSAGR (228 aa)) form the Radical SAM core domain. Residues cysteine 66, cysteine 70, and cysteine 73 each coordinate [4Fe-4S] cluster. Residues cysteine 110, cysteine 141, cysteine 201, and arginine 273 each coordinate [2Fe-2S] cluster.

Belongs to the radical SAM superfamily. Biotin synthase family. As to quaternary structure, homodimer. The cofactor is [4Fe-4S] cluster. Requires [2Fe-2S] cluster as cofactor.

The enzyme catalyses (4R,5S)-dethiobiotin + (sulfur carrier)-SH + 2 reduced [2Fe-2S]-[ferredoxin] + 2 S-adenosyl-L-methionine = (sulfur carrier)-H + biotin + 2 5'-deoxyadenosine + 2 L-methionine + 2 oxidized [2Fe-2S]-[ferredoxin]. It participates in cofactor biosynthesis; biotin biosynthesis; biotin from 7,8-diaminononanoate: step 2/2. Its function is as follows. Catalyzes the conversion of dethiobiotin (DTB) to biotin by the insertion of a sulfur atom into dethiobiotin via a radical-based mechanism. The chain is Biotin synthase from Paramagnetospirillum magneticum (strain ATCC 700264 / AMB-1) (Magnetospirillum magneticum).